A 475-amino-acid polypeptide reads, in one-letter code: Ribulose bisphosphate carboxylase large chain (475 aa).

Positions 1–2 (MS) are excised as a propeptide. Pro3 bears the N-acetylproline mark. Substrate-binding residues include Asn123 and Thr173. Catalysis depends on Lys175, which acts as the Proton acceptor. Lys177 contacts substrate. Mg(2+) contacts are provided by Lys201, Asp203, and Glu204. The residue at position 201 (Lys201) is an N6-carboxylysine. The active-site Proton acceptor is His294. Positions 295, 327, and 379 each coordinate substrate.

It belongs to the RuBisCO large chain family. Type I subfamily. In terms of assembly, heterohexadecamer of 8 large chains and 8 small chains; disulfide-linked. The disulfide link is formed within the large subunit homodimers. Mg(2+) serves as cofactor. In terms of processing, the disulfide bond which can form in the large chain dimeric partners within the hexadecamer appears to be associated with oxidative stress and protein turnover.

It is found in the plastid. It localises to the chloroplast. It carries out the reaction 2 (2R)-3-phosphoglycerate + 2 H(+) = D-ribulose 1,5-bisphosphate + CO2 + H2O. The enzyme catalyses D-ribulose 1,5-bisphosphate + O2 = 2-phosphoglycolate + (2R)-3-phosphoglycerate + 2 H(+). Its function is as follows. RuBisCO catalyzes two reactions: the carboxylation of D-ribulose 1,5-bisphosphate, the primary event in carbon dioxide fixation, as well as the oxidative fragmentation of the pentose substrate in the photorespiration process. Both reactions occur simultaneously and in competition at the same active site. In Gnetum parvifolium (Small-leaved jointfir), this protein is Ribulose bisphosphate carboxylase large chain.